Here is a 300-residue protein sequence, read N- to C-terminus: GTPase Era (300 aa).

Residues 8–176 enclose the Era-type G domain; sequence RCGYVAIVGR…EKVIADHLPE (169 aa). Residues 16 to 23 are G1; sequence GRPNVGKS. 16 to 23 contacts GTP; the sequence is GRPNVGKS. Positions 42–46 are G2; sequence QTTRH. The G3 stretch occupies residues 63-66; it reads DTPG. GTP contacts are provided by residues 63–67 and 125–128; these read DTPGM and NKTD. The tract at residues 125–128 is G4; the sequence is NKTD. The tract at residues 155–157 is G5; it reads ISA. In terms of domain architecture, KH type-2 spans 199–283; that stretch reads VREKIMRQLG…MLNLWVKVKG (85 aa).

The protein belongs to the TRAFAC class TrmE-Era-EngA-EngB-Septin-like GTPase superfamily. Era GTPase family. Monomer.

Its subcellular location is the cytoplasm. It is found in the cell inner membrane. An essential GTPase that binds both GDP and GTP, with rapid nucleotide exchange. Plays a role in 16S rRNA processing and 30S ribosomal subunit biogenesis and possibly also in cell cycle regulation and energy metabolism. The protein is GTPase Era of Pseudomonas fluorescens (strain Pf0-1).